The chain runs to 423 residues: Phosphoribosylamine--glycine ligase (423 aa).

The 206-residue stretch at 107 to 312 folds into the ATP-grasp domain; that stretch reads KDLCARYGIP…LLPLLYAAAT (206 aa). 133–193 serves as a coordination point for ATP; that stretch reads IREEGAPIVI…EAYLDGEEAS (61 aa). Residues E282 and N284 each contribute to the Mg(2+) site.

This sequence belongs to the GARS family. The cofactor is Mg(2+). Mn(2+) serves as cofactor.

It catalyses the reaction 5-phospho-beta-D-ribosylamine + glycine + ATP = N(1)-(5-phospho-beta-D-ribosyl)glycinamide + ADP + phosphate + H(+). It participates in purine metabolism; IMP biosynthesis via de novo pathway; N(1)-(5-phospho-D-ribosyl)glycinamide from 5-phospho-alpha-D-ribose 1-diphosphate: step 2/2. This is Phosphoribosylamine--glycine ligase from Rhizobium meliloti (strain 1021) (Ensifer meliloti).